Consider the following 393-residue polypeptide: Protein TsgA (393 aa).

A run of 12 helical transmembrane segments spans residues 11-31, 51-71, 78-98, 101-121, 134-154, 162-182, 206-226, 245-265, 273-293, 298-318, 332-352, and 361-381; these read WISFLSYALTGALVIVTGMVM, FLNAGILISIFLNAWLMEIVP, FGFILMILAVAGLMLSHSLAL, AAMFVLGLVSGITMSIGTFLI, LLFTDSFFSMAGMVFPMVAAF, WYWVYACIGLVYLAIFILTFG, IGVLFLAVAALCYILGQLGFI, ALVSDFWMSYMFGMWAFSFIL, ILTVLAGMATVLMYLFITGTQ, WFILTLGFFSSAIYTSIITLG, FILTCGTIGTMLTFVVTGPIV, and LLTANGLYAVVFVMCFALGFV.

It belongs to the major facilitator superfamily. TsgA family.

Its subcellular location is the cell inner membrane. This chain is Protein TsgA, found in Salmonella arizonae (strain ATCC BAA-731 / CDC346-86 / RSK2980).